The sequence spans 602 residues: MDDTKTASPAPARAYETPPAERPITDAEAARAAALSANEHIKIASGYLRGTLADGLLKHATGAISEDDGQLVKFHGMYLQDDRDLRPERTRKKLEKAYSFMIRLRIAGGVVSPRQWLALDDIARTYANGTLRATTRQTFQYHGVIKSNLKRTLQAIDAVLLDTIAACGDVNRNVMAATNPAQTGAHAAAYRLAKDISDSLLPKTNAWREIWLDGERVAGGEDEAAEPVYGRTYLPRKFKTVVAVPPSNEVDVFAHDLGFIAILDKKNALKGWNVTVGGGMGMTHGEPDTFPRTADLLGFCEPADALKVAEAVMTVQRDWGNRKSRKNARLKYTIERYGLAAFRAEVERRVGKPLREPKPFQFTGNGDRYGWVEGEDGRHHLTLYVPSGRIRDVEGGPRYLSGLRRIAEIHEGDFRLTGNQNVIVANVPAGARAEIDRLVAEYGLTIGAGALRRNSLACVALPTCGLALAESERFMPDLLTRLEERLAAHGLRDEDITVRMTGCPNGCARPFIAEIGFVGRGPERYNVYLGAAFDGSRLSKLYADDVAAADIPALLDPLFAAYARERIPGERFGDFVIRAGYVARTVNGPDFHDRTGPLRAVA.

The segment at 1 to 23 (MDDTKTASPAPARAYETPPAERP) is disordered. [4Fe-4S] cluster is bound by residues Cys458, Cys464, Cys503, and Cys507. Cys507 provides a ligand contact to siroheme.

It belongs to the nitrite and sulfite reductase 4Fe-4S domain family. In terms of assembly, alpha(8)-beta(8). The alpha component is a flavoprotein, the beta component is a hemoprotein. Siroheme serves as cofactor. The cofactor is [4Fe-4S] cluster.

It carries out the reaction hydrogen sulfide + 3 NADP(+) + 3 H2O = sulfite + 3 NADPH + 4 H(+). Its pathway is sulfur metabolism; hydrogen sulfide biosynthesis; hydrogen sulfide from sulfite (NADPH route): step 1/1. Functionally, component of the sulfite reductase complex that catalyzes the 6-electron reduction of sulfite to sulfide. This is one of several activities required for the biosynthesis of L-cysteine from sulfate. This is Sulfite reductase [NADPH] hemoprotein beta-component from Methylobacterium sp. (strain 4-46).